We begin with the raw amino-acid sequence, 55 residues long: Large ribosomal subunit protein bL33 (55 aa).

It belongs to the bacterial ribosomal protein bL33 family.

The sequence is that of Large ribosomal subunit protein bL33 from Azoarcus sp. (strain BH72).